The primary structure comprises 300 residues: MTSRRSVKSCPREAPRGTHEELYYGPVSPADPESPRDDFRRGAGPMRARPRGEVRFLHYDEAGYALYRDSSSDDDESRDTARPRRSASVAGSHGPGPARAPPPPGGPVGAGGRSHAPPARTPKMTRGAPKASATPATDPARGRRPAQADSAVLLDAPAPTASGRTKTPAQGLAKKLHFSTAPPSPTAPWTPRVAGFNKRVFCAAVGRLAATHARLAAVQLWDMSRPHTDEDLNELLDLTTIRVTVCEGKNLLQRANELVNPDAAQDVDATAAARGRPAGRAAATARAPARSASRPRRPLE.

Residues 1–148 (MTSRRSVKSC…PARGRRPAQA (148 aa)) are disordered. Basic and acidic residues-rich tracts occupy residues 10–22 (CPREAPRGTHEEL) and 50–61 (PRGEVRFLHYDE). Residues 163–166 (GRTK) carry the Nuclear localization signal motif. An interaction with gE region spans residues 174 to 267 (KKLHFSTAPP…LVNPDAAQDV (94 aa)). Positions 232 to 244 (LNELLDLTTIRVT) match the Nuclear export signal motif. Positions 269-292 (ATAAARGRPAGRAAATARAPARSA) are enriched in low complexity. The interval 269–300 (ATAAARGRPAGRAAATARAPARSASRPRRPLE) is disordered.

The protein belongs to the alphaherpesvirinae VP22 tegument protein family. As to quaternary structure, interacts with gE (via C-terminus); this interaction is necessary for the recruitment of VP22 to the Golgi and its packaging into virions. Interacts with gM (via C-terminus). Interacts with VP16; this interaction allows the formation of a tripartite complex composed of VP16, VP22 and UL41/VHS. Interacts with the capsid-binding protein UL16. Interacts with host CGAS. Post-translationally, highly phosphorylated in the host cell. Packaging is selective for underphosphorylated forms.

It is found in the virion tegument. The protein localises to the host cytoplasm. It localises to the host nucleus. Its subcellular location is the host Golgi apparatus. Tegument protein that plays different roles during the time course of infection. Participates in both the accumulation of viral mRNAs and viral protein translation at late time of infection. Modulates the RNase activity of the virion host shutoff protein UL41 probably to ensure necessary levels of key cellular mRNAs and proteins. Plays a role in microtubule reorganization that occurs after viral infection by stabilizing microtubule network. Plays a role in the inhibition of host innate immune system by targeting the CGAS enzymatic activity which is the principal cytosolic DNA sensor that detects invading viral DNA. Acts by mediating disruption of liquid-like droplets in which CGAS is activated, thereby preventing CGAS activity. The polypeptide is Tegument protein VP22 (Homo sapiens (Human)).